We begin with the raw amino-acid sequence, 575 residues long: Inactive terpenoid synthase 20, chloroplastic (575 aa).

The transit peptide at 1-52 (MEAITKNGSLSQTLVHCGPKSLSSFIPVRCLRFSKNPFPKKLVVTRARTSIN) directs the protein to the chloroplast. Residues D332, D336, D474, T478, and E482 each contribute to the Mg(2+) site. The short motif at 332–336 (DDLYD) is the DDXXD motif element.

This sequence belongs to the terpene synthase family. Tpsa subfamily. In terms of tissue distribution, predominantly expressed in roots but also in leaves and stems.

The protein resides in the plastid. Its subcellular location is the chloroplast. Its function is as follows. Does not possess diterpene synthase activity. This is Inactive terpenoid synthase 20, chloroplastic from Arabidopsis thaliana (Mouse-ear cress).